The chain runs to 627 residues: Transketolase-like protein 2 (627 aa).

A substrate-binding site is contributed by His-39. Residues Ser-42, His-79, and 125–127 (GSL) each bind thiamine diphosphate. Asp-157 is a binding site for Mg(2+). Gly-158 and Asn-187 together coordinate thiamine diphosphate. Mg(2+) is bound by residues Asn-187 and Leu-189. Positions 249 and 263 each coordinate thiamine diphosphate. Positions 263, 323, and 350 each coordinate substrate. Residues Glu-371 and Phe-397 each contribute to the thiamine diphosphate site. The Proton donor role is filled by Glu-371. Residues His-421 and Asp-429 each contribute to the substrate site. Gln-433 lines the thiamine diphosphate pocket. Arg-479 contacts substrate.

This sequence belongs to the transketolase family. Homodimer. Requires Mg(2+) as cofactor. Ca(2+) is required as a cofactor. Mn(2+) serves as cofactor. It depends on Co(2+) as a cofactor. The cofactor is thiamine diphosphate.

The enzyme catalyses D-sedoheptulose 7-phosphate + D-glyceraldehyde 3-phosphate = aldehydo-D-ribose 5-phosphate + D-xylulose 5-phosphate. In terms of biological role, plays an essential role in total transketolase activity and cell proliferation in cancer cells; after transfection with anti-TKTL1 siRNA, total transketolase activity dramatically decreases and proliferation was significantly inhibited in cancer cells. Plays a pivotal role in carcinogenesis. The sequence is that of Transketolase-like protein 2 (Tktl2) from Mus musculus (Mouse).